The sequence spans 222 residues: Uracil-DNA glycosylase (222 aa).

Aspartate 61 acts as the Proton acceptor in catalysis.

It belongs to the uracil-DNA glycosylase (UDG) superfamily. UNG family.

Its subcellular location is the cytoplasm. It carries out the reaction Hydrolyzes single-stranded DNA or mismatched double-stranded DNA and polynucleotides, releasing free uracil.. Excises uracil residues from the DNA which can arise as a result of misincorporation of dUMP residues by DNA polymerase or due to deamination of cytosine. The protein is Uracil-DNA glycosylase of Aeromonas hydrophila subsp. hydrophila (strain ATCC 7966 / DSM 30187 / BCRC 13018 / CCUG 14551 / JCM 1027 / KCTC 2358 / NCIMB 9240 / NCTC 8049).